Reading from the N-terminus, the 271-residue chain is MWGDKMRYFPIGVFDSGVGGLTVLKRLMEVLPQENYVYFGDTRRVPYGDRSKEEIKAFTKQIMNFLKKKNVKIFVIACNTISAVFEKEGKEIVFNVVEAGVKSAVETTCNKRIGVIGTRRTTEERIYSNKIKEINKSIEVYEVACPELVPLIEKGFYKTESVKRVVIECVKNLKEEKIDTLVLGCTHYPIVIDYIEEALIGENVRIVDPAERLAYDVKEYITRVNMINPNGSGQVQFYLSKMTQSFIEIAKILLEGKINNYNVSIVDITKY.

Substrate contacts are provided by residues 15 to 16 and 47 to 48; these read DS and YG. The active-site Proton donor/acceptor is C78. Residue 79–80 coordinates substrate; the sequence is NT. Catalysis depends on C185, which acts as the Proton donor/acceptor. 186-187 provides a ligand contact to substrate; that stretch reads TH.

Belongs to the aspartate/glutamate racemases family.

It carries out the reaction L-glutamate = D-glutamate. It participates in cell wall biogenesis; peptidoglycan biosynthesis. Its function is as follows. Provides the (R)-glutamate required for cell wall biosynthesis. This Caldanaerobacter subterraneus subsp. tengcongensis (strain DSM 15242 / JCM 11007 / NBRC 100824 / MB4) (Thermoanaerobacter tengcongensis) protein is Glutamate racemase 3.